A 161-amino-acid chain; its full sequence is Cytochrome b6-f complex subunit 4 (161 aa).

3 consecutive transmembrane segments (helical) span residues 37–57 (LLYI…GLAV), 96–116 (LLGV…PFIE), and 132–152 (SVFL…TLPI).

It belongs to the cytochrome b family. PetD subfamily. In terms of assembly, the 4 large subunits of the cytochrome b6-f complex are cytochrome b6, subunit IV (17 kDa polypeptide, PetD), cytochrome f and the Rieske protein, while the 4 small subunits are PetG, PetL, PetM and PetN. The complex functions as a dimer.

Its subcellular location is the cellular thylakoid membrane. Component of the cytochrome b6-f complex, which mediates electron transfer between photosystem II (PSII) and photosystem I (PSI), cyclic electron flow around PSI, and state transitions. The sequence is that of Cytochrome b6-f complex subunit 4 from Acaryochloris marina (strain MBIC 11017).